Here is a 439-residue protein sequence, read N- to C-terminus: 26S proteasome regulatory subunit 6A (439 aa).

Met-1 carries the N-acetylmethionine modification. Position 9 is a phosphoserine (Ser-9). Position 227-234 (Gly-227–Thr-234) interacts with ATP. Ser-376 carries the post-translational modification Phosphoserine.

Belongs to the AAA ATPase family. In terms of assembly, component of the 19S proteasome regulatory particle complex. The 26S proteasome consists of a 20S core particle (CP) and two 19S regulatory subunits (RP). The regulatory particle is made of a lid composed of 9 subunits, a base containing 6 ATPases including PSMC3 and few additional components. Interacts with PAAF1. (Microbial infection) Interacts with HIV-1 Tat. In terms of processing, sumoylated by UBE2I in response to MEKK1-mediated stimuli.

It is found in the cytoplasm. It localises to the nucleus. Its function is as follows. Component of the 26S proteasome, a multiprotein complex involved in the ATP-dependent degradation of ubiquitinated proteins. This complex plays a key role in the maintenance of protein homeostasis by removing misfolded or damaged proteins, which could impair cellular functions, and by removing proteins whose functions are no longer required. Therefore, the proteasome participates in numerous cellular processes, including cell cycle progression, apoptosis, or DNA damage repair. PSMC3 belongs to the heterohexameric ring of AAA (ATPases associated with diverse cellular activities) proteins that unfolds ubiquitinated target proteins that are concurrently translocated into a proteolytic chamber and degraded into peptides. The polypeptide is 26S proteasome regulatory subunit 6A (PSMC3) (Homo sapiens (Human)).